A 276-amino-acid polypeptide reads, in one-letter code: MNPEHSPLGKATVYAAQYDASLLFPIPRAGAREQLGITSALPFFGTDIWNAYELSWLNTRGKPQVAIATFYVPAESPNIVESKSFKLYLGSFAQSKFDSVDAVRDVLKRDVSAACGASVSVQLVSAHDFAKLEMDELDGLSLDRLDLDTDVYEPDPSLLSAADGENEAPVEETLVSDLLRSNCPVTGQPDWGSVQIHYVGPQIDHAGLLRYIISFRNHTGFHEQCVERIFLDIMHACKPVKLAVYARYTRRGGLDINPFRTNYNQPMPDNARTARQ.

80–82 (VES) lines the substrate pocket. 82–83 (SK) contributes to the NADPH binding site. Catalysis depends on Cys-183, which acts as the Thioimide intermediate. The Proton donor role is filled by Asp-190. 222-223 (HE) contributes to the substrate binding site. Position 251–252 (251–252 (RG)) interacts with NADPH.

Belongs to the GTP cyclohydrolase I family. QueF type 2 subfamily. As to quaternary structure, homodimer.

The protein localises to the cytoplasm. It carries out the reaction 7-aminomethyl-7-carbaguanine + 2 NADP(+) = 7-cyano-7-deazaguanine + 2 NADPH + 3 H(+). The protein operates within tRNA modification; tRNA-queuosine biosynthesis. In terms of biological role, catalyzes the NADPH-dependent reduction of 7-cyano-7-deazaguanine (preQ0) to 7-aminomethyl-7-deazaguanine (preQ1). The polypeptide is NADPH-dependent 7-cyano-7-deazaguanine reductase (Burkholderia orbicola (strain MC0-3)).